The primary structure comprises 354 residues: DNA integrity scanning protein DisA (354 aa).

Residues 6–144 form the DAC domain; sequence GMKIKDTLKI…GDIKYVLRDS (139 aa). Residues Gly-73, Leu-91, and 104-108 each bind ATP; that span reads TRHRT.

It belongs to the DisA family. Homooctamer. It depends on Mg(2+) as a cofactor.

The enzyme catalyses 2 ATP = 3',3'-c-di-AMP + 2 diphosphate. Participates in a DNA-damage check-point that is active prior to asymmetric division when DNA is damaged. DisA forms globular foci that rapidly scan along the chromosomes during sporulation, searching for lesions. When a lesion is present, DisA pauses at the lesion site. This triggers a cellular response that culminates in a temporary block in sporulation initiation. Its function is as follows. Also has diadenylate cyclase activity, catalyzing the condensation of 2 ATP molecules into cyclic di-AMP (c-di-AMP). c-di-AMP acts as a signaling molecule that couples DNA integrity with progression of sporulation. The rise in c-di-AMP level generated by DisA while scanning the chromosome, operates as a positive signal that advances sporulation; upon encountering a lesion, the DisA focus arrests at the damaged site and halts c-di-AMP synthesis. The polypeptide is DNA integrity scanning protein DisA (Clostridium botulinum (strain Eklund 17B / Type B)).